The primary structure comprises 186 residues: Pyridoxal 5'-phosphate synthase subunit PdxT (186 aa).

L-glutamine is bound at residue 46 to 48; sequence GES. Catalysis depends on Cys-75, which acts as the Nucleophile. Residues Arg-101 and 127-128 each bind L-glutamine; that span reads IR. Active-site charge relay system residues include His-164 and Glu-166.

This sequence belongs to the glutaminase PdxT/SNO family. In the presence of PdxS, forms a dodecamer of heterodimers. Only shows activity in the heterodimer.

The catalysed reaction is aldehydo-D-ribose 5-phosphate + D-glyceraldehyde 3-phosphate + L-glutamine = pyridoxal 5'-phosphate + L-glutamate + phosphate + 3 H2O + H(+). The enzyme catalyses L-glutamine + H2O = L-glutamate + NH4(+). The protein operates within cofactor biosynthesis; pyridoxal 5'-phosphate biosynthesis. Functionally, catalyzes the hydrolysis of glutamine to glutamate and ammonia as part of the biosynthesis of pyridoxal 5'-phosphate. The resulting ammonia molecule is channeled to the active site of PdxS. This Methanococcus aeolicus (strain ATCC BAA-1280 / DSM 17508 / OCM 812 / Nankai-3) protein is Pyridoxal 5'-phosphate synthase subunit PdxT.